The primary structure comprises 824 residues: Neuronal PAS domain-containing protein 2 (824 aa).

The span at 1–10 shows a compositional bias: basic and acidic residues; the sequence is MDEDEKDRAK. Residues 1–21 are disordered; it reads MDEDEKDRAKRASRNKSEKKR. Residues 1–61 form a sufficient for heterodimer formation with BMAL1, E-box binding and for the effect of NADPH region; the sequence is MDEDEKDRAK…VIGFLQKHNE (61 aa). A bHLH domain is found at 9–59; the sequence is AKRASRNKSEKKRRDQFNVLIKELSSMLPGNTRKMDKTTVLEKVIGFLQKH. Residues 82 to 152 form the PAS 1 domain; it reads NEEFTQLMLE…KILSSHMLVT (71 aa). Residues His-119 and His-171 each coordinate heme b. Residues 237–307 form the PAS 2 domain; that stretch reads FLKEMCIVDE…RCHQHLMQFG (71 aa). The 44-residue stretch at 311–354 folds into the PAC domain; the sequence is SCCYRFLTKGQQWIWLQTHYYITYHQWNSKPEFIVCTHSVVSYA. Disordered stretches follow at residues 367–437, 556–667, 681–704, and 739–824; these read EDPP…MAEA, SSTQ…PDFS, QPMMPGSCDARQPSEVSRTGRQVK, and PSFP…QPPR. Over residues 378 to 390 the composition is skewed to basic and acidic residues; that stretch reads ALKDKGSSLEPRQ. A compositionally biased stretch (polar residues) spans 421 to 431; it reads TAMSEPTSTPT. The span at 559–576 shows a compositional bias: low complexity; sequence QRPEAQQQLQQRSAAVTQ. A compositionally biased stretch (polar residues) spans 587–610; the sequence is GQISSAQVTSQHLLRESSVISTQG. The segment covering 614–636 has biased composition (low complexity); sequence MRSSQLMQSSGRSGSSLVSPFSS. Polar residues-rich tracts occupy residues 645 to 664 and 694 to 704; these read LNLTTPASTSQDASQCQPSP and SEVSRTGRQVK. The span at 739–760 shows a compositional bias: low complexity; sequence PSFPASQPSPLQPAQARQQPPQ. Residues 766–789 show a composition bias toward polar residues; it reads QAPTSLHSEQQDSLLLSTYSQQPG. Over residues 794 to 805 the composition is skewed to pro residues; the sequence is PQPPPAQPQPLR. Low complexity predominate over residues 809-824; that stretch reads RVSSLSESSGLQQPPR.

Component of the circadian clock oscillator which includes the CRY proteins, CLOCK or NPAS2, BMAL1 or BMAL2, CSNK1D and/or CSNK1E, TIMELESS and the PER proteins. Efficient DNA binding requires dimerization with another bHLH protein. Forms a heterodimer with BMAL1 and this heterodimerization is required for E-box-dependent transactivation. Interacts with NCOA3, KAT2B, CREBBP and EP300. Heme serves as cofactor.

It localises to the nucleus. Carbon monoxide (CO) and the redox state of the cell can modulate the transcriptional activity of the NPAS2-BMAL1 heterodimer. NADH and NADPH enhance the DNA-binding activity of the heterodimer whereas CO binds the heme group in NPAS2 and inhibits the DNA-binding activity of the heterodimer. Transcriptional activator which forms a core component of the circadian clock. The circadian clock, an internal time-keeping system, regulates various physiological processes through the generation of approximately 24 hour circadian rhythms in gene expression, which are translated into rhythms in metabolism and behavior. It is derived from the Latin roots 'circa' (about) and 'diem' (day) and acts as an important regulator of a wide array of physiological functions including metabolism, sleep, body temperature, blood pressure, endocrine, immune, cardiovascular, and renal function. Consists of two major components: the central clock, residing in the suprachiasmatic nucleus (SCN) of the brain, and the peripheral clocks that are present in nearly every tissue and organ system. Both the central and peripheral clocks can be reset by environmental cues, also known as Zeitgebers (German for 'timegivers'). The predominant Zeitgeber for the central clock is light, which is sensed by retina and signals directly to the SCN. The central clock entrains the peripheral clocks through neuronal and hormonal signals, body temperature and feeding-related cues, aligning all clocks with the external light/dark cycle. Circadian rhythms allow an organism to achieve temporal homeostasis with its environment at the molecular level by regulating gene expression to create a peak of protein expression once every 24 hours to control when a particular physiological process is most active with respect to the solar day. Transcription and translation of core clock components (CLOCK, NPAS2, BMAL1, BMAL2, PER1, PER2, PER3, CRY1 and CRY2) plays a critical role in rhythm generation, whereas delays imposed by post-translational modifications (PTMs) are important for determining the period (tau) of the rhythms (tau refers to the period of a rhythm and is the length, in time, of one complete cycle). A diurnal rhythm is synchronized with the day/night cycle, while the ultradian and infradian rhythms have a period shorter and longer than 24 hours, respectively. Disruptions in the circadian rhythms contribute to the pathology of cardiovascular diseases, cancer, metabolic syndromes and aging. A transcription/translation feedback loop (TTFL) forms the core of the molecular circadian clock mechanism. Transcription factors, CLOCK or NPAS2 and BMAL1 or BMAL2, form the positive limb of the feedback loop, act in the form of a heterodimer and activate the transcription of core clock genes and clock-controlled genes (involved in key metabolic processes), harboring E-box elements (5'-CACGTG-3') within their promoters. The core clock genes: PER1/2/3 and CRY1/2 which are transcriptional repressors form the negative limb of the feedback loop and interact with the CLOCK|NPAS2-BMAL1|BMAL2 heterodimer inhibiting its activity and thereby negatively regulating their own expression. This heterodimer also activates nuclear receptors NR1D1/2 and RORA/B/G, which form a second feedback loop and which activate and repress BMAL1 transcription, respectively. The NPAS2-BMAL1 heterodimer positively regulates the expression of MAOA, F7 and LDHA and modulates the circadian rhythm of daytime contrast sensitivity by regulating the rhythmic expression of adenylate cyclase type 1 (ADCY1) in the retina. NPAS2 plays an important role in sleep homeostasis and in maintaining circadian behaviors in normal light/dark and feeding conditions and in the effective synchronization of feeding behavior with scheduled food availability. Regulates the gene transcription of key metabolic pathways in the liver and is involved in DNA damage response by regulating several cell cycle and DNA repair genes. Controls the circadian rhythm of NR0B2 expression by binding rhythmically to its promoter. Mediates the diurnal variation in the expression of GABARA1 receptor in the brain and contributes to the regulation of anxiety-like behaviors and GABAergic neurotransmission in the ventral striatum. The protein is Neuronal PAS domain-containing protein 2 (NPAS2) of Homo sapiens (Human).